Reading from the N-terminus, the 81-residue chain is FASAGPETLCGAELVDALQFVCGDRGFYFNKPTGYGSSSRRAPQTGIVDECCFRSCDLRRLEMYCAPLKPAKAARSVRAQR.

Residues 1 to 4 (FASA) constitute a propeptide that is removed on maturation. The interval 5–33 (GPETLCGAELVDALQFVCGDRGFYFNKPT) is b. Disulfide bonds link C10/C52, C22/C65, and C51/C56. The tract at residues 34 to 45 (GYGSSSRRAPQT) is c. The interval 46 to 66 (GIVDECCFRSCDLRRLEMYCA) is a. The d stretch occupies residues 67 to 74 (PLKPAKAA). The propeptide at 75 to 81 (RSVRAQR) is e peptide.

This sequence belongs to the insulin family. Forms a ternary complex with IGFR1 and ITGAV:ITGB3. Forms a ternary complex with IGFR1 and ITGA6:ITGB4.

The protein localises to the secreted. Its function is as follows. The insulin-like growth factors, isolated from plasma, are structurally and functionally related to insulin but have a much higher growth-promoting activity. May be a physiological regulator of [1-14C]-2-deoxy-D-glucose (2DG) transport and glycogen synthesis in osteoblasts. Stimulates glucose transport in bone-derived osteoblastic (PyMS) cells and is effective at much lower concentrations than insulin, not only regarding glycogen and DNA synthesis but also with regard to enhancing glucose uptake. May play a role in synapse maturation. Ca(2+)-dependent exocytosis of IGF1 is required for sensory perception of smell in the olfactory bulb. Acts as a ligand for IGF1R. Binds to the alpha subunit of IGF1R, leading to the activation of the intrinsic tyrosine kinase activity which autophosphorylates tyrosine residues in the beta subunit thus initiating a cascade of down-stream signaling events leading to activation of the PI3K-AKT/PKB and the Ras-MAPK pathways. Binds to integrins ITGAV:ITGB3 and ITGA6:ITGB4. Its binding to integrins and subsequent ternary complex formation with integrins and IGFR1 are essential for IGF1 signaling. Induces the phosphorylation and activation of IGFR1, MAPK3/ERK1, MAPK1/ERK2 and AKT1. As part of the MAPK/ERK signaling pathway, acts as a negative regulator of apoptosis in cardiomyocytes via promotion of STUB1/CHIP-mediated ubiquitination and degradation of ICER-type isoforms of CREM. The chain is Insulin-like growth factor 1 from Suncus murinus (Asian house shrew).